Reading from the N-terminus, the 153-residue chain is Carbohydrate-binding protein AWN (153 aa).

Residues 1–20 form the signal peptide; it reads MKLAAPSLALLLSTATLVSG. A21 is subject to N-acetylalanine. Disulfide bonds link C29–C50 and C73–C94. Positions 29–130 constitute a CUB domain; sequence CGGVLRDPPG…SPFHIYYYAD (102 aa). A heparin-binding region spans residues 93–130; it reads ICGGISLVFRSSSNIATIKYLRTSGQRASPFHIYYYAD.

The protein belongs to the spermadhesin family. Post-translationally, partial N-acetylation differentiates isoforms AWN-1 (not acetylated) and AWN-2 (acetylated).

It is found in the secreted. Its function is as follows. AWN proteins mediate the binding of boar spermatozoa to component(s) of the egg's zona pellucida by a carbohydrate-binding mechanism. Awn proteins are secretory components of the male accessory glands being coated to the sperm surface at the time of ejaculation. They possess as well heparin-, serine-protease-inhibitor-binding capability. This is Carbohydrate-binding protein AWN from Sus scrofa (Pig).